The chain runs to 552 residues: Hyaluronan synthase 2 (552 aa).

The Cytoplasmic portion of the chain corresponds to 1-11; it reads MYCERFICILR. The chain crosses the membrane as a helical span at residues 12-32; it reads ILGTTLFGVSLLLGITAAYIV. At 33–45 the chain is on the extracellular side; that stretch reads GYQFIQTDNYYFS. Residues 46–66 traverse the membrane as a helical segment; the sequence is FGLYGAILASHLIIQSLFAYL. Residues 67-374 are Cytoplasmic-facing; sequence EHRKMKRSLE…NAMWFHKHHL (308 aa). The helical transmembrane segment at 375 to 395 threads the bilayer; the sequence is WMTYEAVITGFFPFFLIATVI. Over 396–402 the chain is Extracellular; that stretch reads QLFYRGK. A helical transmembrane segment spans residues 403–423; the sequence is IWNILLFLLTVQLVGLIKSSF. Residues 424-429 are Cytoplasmic-facing; sequence ASFLRG. The chain crosses the membrane as a helical span at residues 430–450; sequence NIVMVFMSLYSVLYMSSLLPA. Residues 451-475 lie on the Extracellular side of the membrane; it reads KMFAIATINKAGWGTSGRKTIVVNF. The helical transmembrane segment at 476 to 496 threads the bilayer; that stretch reads IGLIPVSIWFTILLGRVIFTI. The Cytoplasmic portion of the chain corresponds to 497–510; the sequence is YKESKKPFSESKTT. A helical transmembrane segment spans residues 511–531; that stretch reads VLVIGTILYACYWVLLLTLYL. At 532 to 552 the chain is on the extracellular side; sequence VLITKCGRRKKEQHYDMVLDV.

It belongs to the NodC/HAS family. In terms of assembly, homodimer; dimerization promotes enzymatic activity. It depends on Mg(2+) as a cofactor.

Its subcellular location is the cell membrane. The protein resides in the endoplasmic reticulum membrane. The protein localises to the vesicle. It localises to the golgi apparatus membrane. It is found in the lysosome. The catalysed reaction is [hyaluronan](n) + UDP-N-acetyl-alpha-D-glucosamine = N-acetyl-beta-D-glucosaminyl-(1-&gt;4)-[hyaluronan](n) + UDP + H(+). The enzyme catalyses N-acetyl-beta-D-glucosaminyl-(1-&gt;4)-[hyaluronan](n) + UDP-alpha-D-glucuronate = [hyaluronan](n+1) + UDP + H(+). It functions in the pathway glycan biosynthesis; hyaluronan biosynthesis. Catalyzes the addition of GlcNAc or GlcUA monosaccharides to the nascent hyaluronan polymer. Therefore, it is essential to hyaluronan synthesis a major component of most extracellular matrices that has a structural role in tissues architectures and regulates cell adhesion, migration and differentiation. This is one of three isoenzymes responsible for cellular hyaluronan synthesis and it is particularly responsible for the synthesis of high molecular mass hyaluronan. This chain is Hyaluronan synthase 2 (HAS2), found in Gallus gallus (Chicken).